The chain runs to 539 residues: Chitin deacetylase 1 (539 aa).

A signal peptide spans 1–23; that stretch reads MARYARVATLAACLLFACALADG. Residues 42–104 form the Chitin-binding type-2 domain; it reads QELCKDKDAG…WKDAVKNCKL (63 aa). 6 cysteine pairs are disulfide-bonded: Cys-80–Cys-93, Cys-122–Cys-134, Cys-129–Cys-147, Cys-141–Cys-156, Cys-168–Cys-180, and Cys-173–Cys-178. Residues 121–157 enclose the LDL-receptor class A domain; sequence LCQDGFLACGDSTCIERGLFCNGEKDCGDGSDENSCD. Position 206 (Asp-206) interacts with Zn(2+). Cystine bridges form between Cys-230-Cys-489, Cys-354-Cys-361, Cys-391-Cys-397, Cys-497-Cys-520, and Cys-503-Cys-523. Asn-244 carries N-linked (GlcNAc...) asparagine glycosylation. Zn(2+) is bound by residues His-261 and His-265. Asn-296 carries N-linked (GlcNAc...) asparagine glycosylation.

The protein belongs to the carbohydrate esterase 4 (CE4) family. In terms of assembly, interacts with CPAP3-A1. The cofactor is Zn(2+). In terms of tissue distribution, highly expressed in epidermis and head. Moderate expression levels in fat body, Malpighian tubule, testis and midgut. Low expression in silk gland and ovary.

The protein localises to the secreted. The catalysed reaction is [(1-&gt;4)-N-acetyl-beta-D-glucosaminyl](n) + n H2O = chitosan + n acetate. With respect to regulation, binding to the accessory protein CPAP3-A1 is essential for chitinase activity. In terms of biological role, hydrolyzes the N-acetamido groups of N-acetyl-D-glucosamine residues in chitin. This chain is Chitin deacetylase 1, found in Bombyx mori (Silk moth).